Reading from the N-terminus, the 285-residue chain is MLLATFKLCAGSSYRHVRSMKGLQQQAVLAIGQELNRRALGGPAPAAWINQVRRRGSLLGSQLEDPLYSDQELAYIQQGEEAMQRALGILKDQEGWKKESRQANGDEVLSKVIPDVGKVFRLEVVVDQPMERLYEELVERMEAMGEWNPNVKEIKVLQKIGKDTVITHELAAEVAGNLVGPRDFVSVRCTKRRGSMCVLAGMATLYEEMPQQKGVIRAEHGPTCMVLRPLAGSPSRTKLTWLLSIDLKGWLPKTIINQVLSQTQVDFANHLRKRLESCPALEARC.

A mitochondrion-targeting transit peptide spans 1–63; the sequence is MLLATFKLCA…RRGSLLGSQL (63 aa). A phosphoserine; by PKA mark is found at serine 57 and serine 195. Residues 67–280 enclose the START domain; sequence LYSDQELAYI…LRKRLESCPA (214 aa).

In terms of assembly, may interact with TSPO. Corpus luteum and adrenal gland.

Its subcellular location is the mitochondrion. The enzyme catalyses cholesterol(in) = cholesterol(out). It participates in steroid metabolism; cholesterol metabolism. Plays a key role in steroid hormone synthesis by enhancing the metabolism of cholesterol into pregnenolone. Mediates the transfer of cholesterol from the outer mitochondrial membrane to the inner mitochondrial membrane where it is cleaved to pregnenolone. The sequence is that of Steroidogenic acute regulatory protein, mitochondrial (STAR) from Bos taurus (Bovine).